The primary structure comprises 959 residues: MNFLRGVMGGQSAGPQHTEAETIQKLCDRVASSTLLDDRRNAVRALKSLSKKYRLEVGIQAMEHLIHVLQTDRSDSEIIAYALDTLYNIISNDEEEEVEENSTRQSEDLGSQFTEIFIKQPENVTLLLSLLEEFDFHVRWPGVRLLTSLLKQLGPPVQQIILVSPMGVSKLMDLLADSREIIRNDGVLLLQALTRSNGAIQKIVAFENAFERLLDIITEEGNSDGGIVVEDCLILLQNLLKNNNSNQNFFKEGSYIQRMKAWFEVGDENPGWSAQKVTNLHLMLQLVRVLVSPTNPPGATSSCQKAMFQCGLLQQLCTILMATGIPADILTETINTVSEVIRGCQVNQDYFASVNAPSNPPRPAIVVLLMSMVNERQPFVLRCAVLYCFQCFLYKNEKGQGEIVATLLPSTIDATGNSVSAGQLLCGGLFSTDSLSNWCAAVALAHALQGNATQKEQLLRVQLATSIGNPPVSLLQQCTNILSQGSKIQTRVGLLMLLCTWLSNCPIAVTHFLHNSANVPFLTGQIAENLGEEEQLVQGLCALLLGISIYFNDNSLENYTKEKLKQLIEKRIGKENYIEKLGFISKHELYSRASQKPQPNFPSPEYMIFDHEFTKLVKELEGVITKAIYKSSEEDKKEEEVKKTLEQHDNIVTHYKNMIREQDLQLEELKQQVSTLKCQNEQLQTAVTQQASQIQQHKDQYNLLKVQLGKDNHHQGSHSDGAQVNGIQPEEISRLREEIEELRSHQVLLQSQLAEKDTVIENLRSSQVSGMSEQALATCSPRDAEQVAELKQELSALKSQLCSQSLEITRLQTENSELQQRAETLAKSVPVEGESELVTAAKTTDVEGRLSALLQETKELKNEIKALSEERTAIQKQLDSSNSTIAILQTEKDKLYLEVTDSKKEQDDLLVLLADQDQKILSLKSKLKDLGHPVEEEDESGDQEDDDDELDDGDRDQDI.

The tract at residues 1–637 (MNFLRGVMGG…IYKSSEEDKK (637 aa)) is globular head. ARM repeat units follow at residues 20–60 (AETI…VGIQ), 61–121 (AMEH…IKQP), 123–163 (NVTL…IILV), 166–207 (MGVS…VAFE), 208–253 (NAFE…FKEG), 255–310 (YIQR…MFQC), 311–354 (GLLQ…FASV), 363–408 (PAIV…ATLL), 420–459 (SAGQLLCGGLFSTDSLSNWCAAVALAHALQGNATQKEQLL), 473–513 (SLLQ…THFL), 518–571 (NVPF…IEKR), and 573–630 (GKEN…AIYK). S50 is subject to Phosphoserine. K202 carries the post-translational modification N6-acetyllysine. Residues 638–930 (EEEVKKTLEQ…LSLKSKLKDL (293 aa)) adopt a coiled-coil conformation. The segment at 925 to 959 (SKLKDLGHPVEEEDESGDQEDDDDELDDGDRDQDI) is disordered. Residues 935 to 959 (EEEDESGDQEDDDDELDDGDRDQDI) show a composition bias toward acidic residues. Position 940 is a phosphoserine (S940).

This sequence belongs to the VDP/USO1/EDE1 family. Homodimer. Dimerizes by parallel association of the tails, resulting in an elongated structure with two globular head domains side by side, and a long rod-like tail structure. Interacts with MIF. Interacts with GM130/GOLGA2; interaction is disrupted upon phosphorylation of GM130/GOLGA2 by CDK1 at the onset of mitosis. In terms of processing, phosphorylated in a cell cycle-specific manner; phosphorylated in interphase but not in mitotic cells. Dephosphorylated protein associates with the Golgi membrane; phosphorylation promostes dissociation.

Its subcellular location is the cytoplasm. The protein resides in the cytosol. The protein localises to the golgi apparatus membrane. Its function is as follows. General vesicular transport factor required for intercisternal transport in the Golgi stack; it is required for transcytotic fusion and/or subsequent binding of the vesicles to the target membrane. May well act as a vesicular anchor by interacting with the target membrane and holding the vesicular and target membranes in proximity. In Rattus norvegicus (Rat), this protein is General vesicular transport factor p115 (Uso1).